Reading from the N-terminus, the 182-residue chain is Adenine phosphoribosyltransferase (182 aa).

Belongs to the purine/pyrimidine phosphoribosyltransferase family. As to quaternary structure, homodimer.

Its subcellular location is the cytoplasm. The enzyme catalyses AMP + diphosphate = 5-phospho-alpha-D-ribose 1-diphosphate + adenine. The protein operates within purine metabolism; AMP biosynthesis via salvage pathway; AMP from adenine: step 1/1. In terms of biological role, catalyzes a salvage reaction resulting in the formation of AMP, that is energically less costly than de novo synthesis. The sequence is that of Adenine phosphoribosyltransferase from Pseudomonas syringae pv. syringae (strain B728a).